A 52-amino-acid polypeptide reads, in one-letter code: UPF0181 protein NTHI1697 (52 aa).

It belongs to the UPF0181 family.

The polypeptide is UPF0181 protein NTHI1697 (Haemophilus influenzae (strain 86-028NP)).